A 143-amino-acid polypeptide reads, in one-letter code: MALQRTFSIIKPDAVAKNVIGEITTRFEKAGLRVVASKMVQLSEREAAGFYAEHSERGFFKDLVAFMTSGPVIVQVLEGENAVAKNRELMGATNPKEAAPGTIRADFAVSIDENAVHGSDSEASAAREIAYFFAATEVCARIR.

ATP contacts are provided by Lys-11, Phe-59, Arg-87, Thr-93, Arg-104, and Asn-114. The active-site Pros-phosphohistidine intermediate is His-117.

The protein belongs to the NDK family. In terms of assembly, homotetramer. The cofactor is Mg(2+).

Its subcellular location is the cytoplasm. It carries out the reaction a 2'-deoxyribonucleoside 5'-diphosphate + ATP = a 2'-deoxyribonucleoside 5'-triphosphate + ADP. It catalyses the reaction a ribonucleoside 5'-diphosphate + ATP = a ribonucleoside 5'-triphosphate + ADP. Its function is as follows. Major role in the synthesis of nucleoside triphosphates other than ATP. The ATP gamma phosphate is transferred to the NDP beta phosphate via a ping-pong mechanism, using a phosphorylated active-site intermediate. The polypeptide is Nucleoside diphosphate kinase (Stutzerimonas stutzeri (strain A1501) (Pseudomonas stutzeri)).